The primary structure comprises 241 residues: uncharacterized protein (241 aa).

Disordered regions lie at residues E19–G59, V101–S139, and R152–S182. Residues A34 to S48 are compositionally biased toward gly residues. The segment covering P49–L58 has biased composition (polar residues). Pro residues predominate over residues P106–P118.

This is an uncharacterized protein from Homo sapiens (Human).